The primary structure comprises 701 residues: Elongation factor G (701 aa).

The tr-type G domain maps to 11–287 (SRVRNFGIMA…AVVDYLPSPL (277 aa)). GTP is bound by residues 20 to 27 (AHIDAGKT), 84 to 88 (DTPGH), and 138 to 141 (NKMD).

Belongs to the TRAFAC class translation factor GTPase superfamily. Classic translation factor GTPase family. EF-G/EF-2 subfamily.

The protein resides in the cytoplasm. Catalyzes the GTP-dependent ribosomal translocation step during translation elongation. During this step, the ribosome changes from the pre-translocational (PRE) to the post-translocational (POST) state as the newly formed A-site-bound peptidyl-tRNA and P-site-bound deacylated tRNA move to the P and E sites, respectively. Catalyzes the coordinated movement of the two tRNA molecules, the mRNA and conformational changes in the ribosome. This Mycobacterium tuberculosis (strain CDC 1551 / Oshkosh) protein is Elongation factor G (fusA).